A 136-amino-acid polypeptide reads, in one-letter code: S-protein homolog 6 (136 aa).

Residues 1-17 (MFIIIFIVLISLIGCET) form the signal peptide. Asn76 and Asn108 each carry an N-linked (GlcNAc...) asparagine glycan.

Belongs to the plant self-incompatibility (S1) protein family.

The protein resides in the secreted. The sequence is that of S-protein homolog 6 from Arabidopsis thaliana (Mouse-ear cress).